We begin with the raw amino-acid sequence, 902 residues long: Cytosolic 10-formyltetrahydrofolate dehydrogenase (902 aa).

The tract at residues 1–310 (MKIAVIGQSL…PASQYYKTAD (310 aa)) is hydrolase domain. Residue 88 to 90 (QFI) participates in (6R)-10-formyltetrahydrofolate binding. The active-site Proton donor is the His106. Asp142 provides a ligand contact to (6R)-10-formyltetrahydrofolate. The region spanning 318 to 395 (DEEKKFSEEI…EFIQMVVRRL (78 aa)) is the Carrier domain. Ser354 carries the O-(pantetheine 4'-phosphoryl)serine modification. The interval 417–902 (TVKIPHQLFI…LKTKAVTIEY (486 aa)) is aldehyde dehydrogenase domain. NADP(+) contacts are provided by residues 571-573 (IPW), 597-600 (KPAQ), 630-635 (GSLIGQ), 650-651 (GS), and 673-674 (EL). Glu673 (proton acceptor) is an active-site residue. The Proton donor role is filled by Cys707. NADP(+)-binding positions include Lys757 and 804–806 (ESF).

In the N-terminal section; belongs to the GART family. The protein in the C-terminal section; belongs to the aldehyde dehydrogenase family. ALDH1L subfamily. Homotetramer. Post-translationally, phosphopantetheinylation at Ser-354 by AASDHPPT is required for the formyltetrahydrofolate dehydrogenase activity.

Its subcellular location is the cytoplasm. The protein localises to the cytosol. It catalyses the reaction (6R)-10-formyltetrahydrofolate + NADP(+) + H2O = (6S)-5,6,7,8-tetrahydrofolate + CO2 + NADPH + H(+). In terms of biological role, cytosolic 10-formyltetrahydrofolate dehydrogenase that catalyzes the NADP(+)-dependent conversion of 10-formyltetrahydrofolate to tetrahydrofolate and carbon dioxide. May also have an NADP(+)-dependent aldehyde dehydrogenase activity towards formaldehyde, acetaldehyde, propionaldehyde, and benzaldehyde. Regulates reduced folate pools as well as glycine metabolism. This is Cytosolic 10-formyltetrahydrofolate dehydrogenase (aldh1l1) from Xenopus tropicalis (Western clawed frog).